A 273-amino-acid chain; its full sequence is Urease accessory protein UreD (273 aa).

Residues 1-29 (MLMRTATPLDQPRAIGSARVSSKRVNGGS) are disordered.

It belongs to the UreD family. In terms of assembly, ureD, UreF and UreG form a complex that acts as a GTP-hydrolysis-dependent molecular chaperone, activating the urease apoprotein by helping to assemble the nickel containing metallocenter of UreC. The UreE protein probably delivers the nickel.

Its subcellular location is the cytoplasm. In terms of biological role, required for maturation of urease via the functional incorporation of the urease nickel metallocenter. This is Urease accessory protein UreD from Roseobacter denitrificans (strain ATCC 33942 / OCh 114) (Erythrobacter sp. (strain OCh 114)).